We begin with the raw amino-acid sequence, 691 residues long: Protein phosphatase 1 regulatory subunit 37 (691 aa).

The disordered stretch occupies residues 1 to 43; the sequence is MEIAPQEAPPVPGADGDIEEAPAEAGSPSPASPPADGRLKAAA. A phosphoserine mark is found at serine 50 and serine 56. LRR repeat units follow at residues 220–240, 248–269, 277–297, 306–326, and 334–354; these read SLAV…MLLA, NLRE…AQLG, SLQI…AYIC, GLVT…AFLG, and SLET…RHLK. The segment at 460–662 is disordered; it reads EREEKEQPPQ…PEVKGGSCGL (203 aa). The segment covering 468 to 481 has biased composition (polar residues); it reads PQLSASMPETTATE. Residues 505 to 523 show a composition bias toward acidic residues; it reads SDSDSDSDGEEEEEEEGER. Serine 561 carries the post-translational modification Phosphoserine. 2 stretches are compositionally biased toward pro residues: residues 584–605 and 620–634; these read PASP…PSLP and PQPP…PPLP.

This sequence belongs to the PPP1R37 family. Interacts with PPP1CA.

In terms of biological role, inhibits phosphatase activity of protein phosphatase 1 (PP1) complexes. The protein is Protein phosphatase 1 regulatory subunit 37 (PPP1R37) of Homo sapiens (Human).